The chain runs to 260 residues: Intermembrane phospholipid transport system permease protein MlaE (260 aa).

The Cytoplasmic portion of the chain corresponds to 1–50 (MLLNALASLGHKGIKTLRTFGRAGLMLFNALVGKPEFRKHAPLLVRQLYN). The chain crosses the membrane as a helical span at residues 51–71 (VGVLSMLIIVVSGVFIGMVLG). The Periplasmic segment spans residues 72–88 (LQGYLVLTTYSAETSLG). Residues 89-109 (MLVALSLLRELGPVVAALLFA) form a helical membrane-spanning segment. The Cytoplasmic segment spans residues 110-147 (GRAGSALTAEIGLMRATEQLSSMEMMAVDPLRRVISPR). The helical transmembrane segment at 148–168 (FWAGVISLPLLTVIFVAVGIW) threads the bilayer. Topologically, residues 169-198 (GGSLVGVSWKGIDSGFFWSAMQNAVDWRMD) are periplasmic. A helical transmembrane segment spans residues 199–219 (LVNCLIKSVVFAITVTWISLF). The Cytoplasmic segment spans residues 220–238 (NGYDAIPTSAGISRATTRT). Residues 239-259 (VVHSSLAVLGLDFVLTALMFG) form a helical membrane-spanning segment. N260 is a topological domain (periplasmic).

The protein belongs to the MlaE permease family. The complex is composed of two ATP-binding proteins (MlaF), two transmembrane proteins (MlaE), two cytoplasmic solute-binding proteins (MlaB) and six periplasmic solute-binding proteins (MlaD).

The protein localises to the cell inner membrane. Functionally, part of the ABC transporter complex MlaFEDB, which is involved in a phospholipid transport pathway that maintains lipid asymmetry in the outer membrane by retrograde trafficking of phospholipids from the outer membrane to the inner membrane. Probably responsible for the translocation of the substrate across the membrane. This is Intermembrane phospholipid transport system permease protein MlaE from Escherichia coli O157:H7.